The sequence spans 368 residues: GDSL esterase/lipase At4g16230 (368 aa).

The first 24 residues, 1–24 (MSLLVFLCQIIVLSVLFFSEVCLA), serve as a signal peptide directing secretion. The active-site Nucleophile is Ser37. N-linked (GlcNAc...) asparagine glycosylation is found at Asn117 and Asn286. Residues Asp329 and His332 contribute to the active site.

This sequence belongs to the 'GDSL' lipolytic enzyme family.

It is found in the secreted. The protein is GDSL esterase/lipase At4g16230 of Arabidopsis thaliana (Mouse-ear cress).